The chain runs to 201 residues: Protein lin-7 homolog B (201 aa).

The short motif at 1–13 (MAALVEPLGLERE) is the Kinase interacting site element. The L27 domain occupies 10–65 (LEREVSRAVELLERLQRSGELPPQKLQALQRVLQSRFCSAIREVYEQLYDTLDITG). The 83-residue stretch at 93 to 175 (VVELPKTDEG…SVKLVVRYTP (83 aa)) folds into the PDZ domain.

It belongs to the lin-7 family. Forms a complex with CASK and CASKIN1. Component of the brain-specific heterotrimeric complex (LIN-10-LIN-2-LIN-7 complex) composed of at least APBA1, CASK, and LIN7, which associates with the motor protein KIF17 to transport vesicles along microtubules. Forms a heterotrimeric complex composed of MMP5, LIN7B and PATJ; the N-terminal L27 domain of PALS1 interacts with the L27 domain of PATJ and the C-terminal L27 domain of PALS1 interacts with the L27 domain of LIN7B. Forms a heterotrimeric complex with DLG1 and CASK via their L27 domains. Interacts with DLG4 and GRIN2B as well as CDH1 and CTNNB1, the channels KCNJ12/Kir2.2, KCNJ4/Kir2.3 and probably KCNJ2/Kir2.1 and SLC6A12/BGT-1 via its PDZ domain. The association of LIN7A with cadherin and beta-catenin is calcium-dependent, occurs at synaptic junctions and requires the actin cytoskeleton. Interacts with EGFR, ERBB2, ERBB3 and ERBB4 with both PDZ and KID domains. Interacts with ASIC3. Interacts with TOPK. Interacts with RTKN. Associates with KIF17 via APBA1. Interacts with APBA1. Interacts with MPP7. Interacts with DLG2. Interacts with DLG3.

Its subcellular location is the cell membrane. The protein resides in the basolateral cell membrane. It is found in the cell junction. The protein localises to the postsynaptic density membrane. It localises to the tight junction. Functionally, plays a role in establishing and maintaining the asymmetric distribution of channels and receptors at the plasma membrane of polarized cells. Forms membrane-associated multiprotein complexes that may regulate delivery and recycling of proteins to the correct membrane domains. The tripartite complex composed of LIN7 (LIN7A, LIN7B or LIN7C), CASK and APBA1 associates with the motor protein KIF17 to transport vesicles containing N-methyl-D-aspartate (NMDA) receptor subunit NR2B along microtubules. This complex may have the potential to couple synaptic vesicle exocytosis to cell adhesion in brain. Ensures the proper localization of GRIN2B (subunit 2B of the NMDA receptor) to neuronal postsynaptic density and may function in localizing synaptic vesicles at synapses where it is recruited by beta-catenin and cadherin. Required to localize Kir2 channels, GABA transporter (SLC6A12) and EGFR/ERBB1, ERBB2, ERBB3 and ERBB4 to the basolateral membrane of epithelial cells. May increase the amplitude of ASIC3 acid-evoked currents by stabilizing the channel at the cell surface. The chain is Protein lin-7 homolog B (LIN7B) from Bos taurus (Bovine).